A 1057-amino-acid chain; its full sequence is Probable E3 ubiquitin-protein ligase HERC4 (1057 aa).

RCC1 repeat units lie at residues Met-1–Asp-51, Asp-52–Asp-101, Lys-102–Lys-154, Ser-156–Leu-207, Ser-208–Lys-259, Gly-261–Pro-311, and Ser-313–Arg-366. The region spanning Lys-730–Ile-1057 is the HECT domain. Cys-1025 acts as the Glycyl thioester intermediate in catalysis.

In terms of tissue distribution, ubiquitously expressed, highest expression is found in testis during spermiogenesis. It is specifically found in spermatogonia, spermatocytes, and spermatids with little or no expression detectable in the spermatozoa, or interstitial cells.

Its subcellular location is the cytoplasm. The protein localises to the cytosol. It carries out the reaction S-ubiquitinyl-[E2 ubiquitin-conjugating enzyme]-L-cysteine + [acceptor protein]-L-lysine = [E2 ubiquitin-conjugating enzyme]-L-cysteine + N(6)-ubiquitinyl-[acceptor protein]-L-lysine.. It functions in the pathway protein modification; protein ubiquitination. In terms of biological role, probable E3 ubiquitin-protein ligase involved in either protein trafficking or in the distribution of cellular structures. Required for spermatozoon maturation and fertility, and for the removal of the cytoplasmic droplet of the spermatozoon. E3 ubiquitin-protein ligases accept ubiquitin from an E2 ubiquitin-conjugating enzyme in the form of a thioester and then directly transfer it to targeted substrates. The chain is Probable E3 ubiquitin-protein ligase HERC4 (Herc4) from Mus musculus (Mouse).